The sequence spans 173 residues: Co-chaperone protein HscB homolog (173 aa).

Residues 5-77 (CHFALFELKP…PKRARYLLAM (73 aa)) form the J domain.

This sequence belongs to the HscB family. As to quaternary structure, interacts with HscA and stimulates its ATPase activity.

Functionally, co-chaperone involved in the maturation of iron-sulfur cluster-containing proteins. Seems to help targeting proteins to be folded toward HscA. In Pseudomonas syringae pv. tomato (strain ATCC BAA-871 / DC3000), this protein is Co-chaperone protein HscB homolog.